The sequence spans 114 residues: Small ribosomal subunit protein uS17 (114 aa).

It belongs to the universal ribosomal protein uS17 family. As to quaternary structure, part of the 30S ribosomal subunit.

One of the primary rRNA binding proteins, it binds specifically to the 5'-end of 16S ribosomal RNA. The polypeptide is Small ribosomal subunit protein uS17 (Saccharolobus solfataricus (strain ATCC 35092 / DSM 1617 / JCM 11322 / P2) (Sulfolobus solfataricus)).